A 561-amino-acid chain; its full sequence is Foot protein 1 variant 1 (561 aa).

Residues 1–20 form the signal peptide; that stretch reads MARNMNILTLFAVLIGSASA. 3',4'-dihydroxyphenylalanine is present on Tyr22. At Pro33 the chain carries 4-hydroxyproline. One copy of the A-1; approximate repeat lies at 41-50; sequence VHPPAWTAWK. Residues 41-410 are 13 X 10 AA A-P-P-P-A-W-T-A-W-K; sequence VHPPAWTAWK…APPPAWTAWK (370 aa). 7'-hydroxytryptophan occurs at positions 46, 49, 56, and 59. Residues Trp46, Trp49, Trp56, and Trp59 are each glycosylated (C-linked (Man) hydroxytryptophan). The A-2; approximate repeat unit spans residues 51–60; that stretch reads AHPPAWTAWK. Residues 61–70 form a B-1 repeat; that stretch reads ATPKPWTAWK. The tract at residues 61–440 is 27 X 10 AA A-T-P-K-P-W-T-A-W-K; it reads ATPKPWTAWK…ATPKPWTAWR (380 aa). Pro65 carries the post-translational modification 4-hydroxyproline. Residue Trp66 is glycosylated (C-linked (Man) tryptophan). Trp69 is modified (7'-hydroxytryptophan). Trp69 carries a C-linked (Man) hydroxytryptophan glycan. An A-3 repeat occupies 71-80; the sequence is APPPAWTAWK. A 4-hydroxyproline mark is found at Pro72, Pro73, and Pro74. 2 positions are modified to 7'-hydroxytryptophan: Trp76 and Trp79. 2 C-linked (Man) hydroxytryptophan glycosylation sites follow: Trp76 and Trp79. Residues 81 to 90 form a B-2 repeat; it reads ATPKPWTAWK. The residue at position 85 (Pro85) is a 4-hydroxyproline. A C-linked (Man) tryptophan glycan is attached at Trp86. Trp89 carries the post-translational modification 7'-hydroxytryptophan. C-linked (Man) hydroxytryptophan glycosylation occurs at Trp89. The stretch at 91-100 is one A-4; approximate repeat; sequence APPPTWTAWK. 4-hydroxyproline occurs at positions 92, 93, and 94. 2 positions are modified to 7'-hydroxytryptophan: Trp96 and Trp99. C-linked (Man) hydroxytryptophan glycans are attached at residues Trp96 and Trp99. A B-3 repeat occupies 101 to 110; that stretch reads ATPKPWTAWK. Pro105 carries the 4-hydroxyproline modification. Trp106 is a glycosylation site (C-linked (Man) tryptophan). Residue Trp109 is modified to 7'-hydroxytryptophan. Trp109 carries a C-linked (Man) hydroxytryptophan glycan. One copy of the A-5 repeat lies at 111–120; that stretch reads APPPAWTAWK. Residues Pro112, Pro113, and Pro114 each carry the 4-hydroxyproline modification. 7'-hydroxytryptophan is present on residues Trp116 and Trp119. C-linked (Man) hydroxytryptophan glycosylation is found at Trp116 and Trp119. One copy of the B-4; approximate repeat lies at 121-130; that stretch reads ATLKPWTAWK. Pro125 is modified (4-hydroxyproline). Trp126 is a glycosylation site (C-linked (Man) tryptophan). At Trp129 the chain carries 7'-hydroxytryptophan. The C-linked (Man) hydroxytryptophan glycan is linked to Trp129. The stretch at 131–140 is one B-5 repeat; it reads ATPKPWTAWK. Pro135 is modified (4-hydroxyproline). C-linked (Man) tryptophan glycosylation occurs at Trp136. Trp139 is subject to 7'-hydroxytryptophan. Trp139 is a glycosylation site (C-linked (Man) hydroxytryptophan). The stretch at 141–150 is one B-6 repeat; it reads ATPKPWTAWK. 4-hydroxyproline is present on Pro145. Trp146 carries C-linked (Man) tryptophan glycosylation. At Trp149 the chain carries 7'-hydroxytryptophan. A glycan (C-linked (Man) hydroxytryptophan) is linked at Trp149. A B-7 repeat occupies 151–160; sequence ATPKPWTAWK. Pro155 carries the post-translational modification 4-hydroxyproline. A glycan (C-linked (Man) tryptophan) is linked at Trp156. A 7'-hydroxytryptophan modification is found at Trp159. Residue Trp159 is glycosylated (C-linked (Man) hydroxytryptophan). A B-8 repeat occupies 161 to 170; sequence ATPKPWTAWK. The residue at position 165 (Pro165) is a 4-hydroxyproline. Trp166 carries C-linked (Man) tryptophan glycosylation. Trp169 is subject to 7'-hydroxytryptophan. A C-linked (Man) hydroxytryptophan glycan is attached at Trp169. One copy of the B-9; approximate repeat lies at 171 to 180; the sequence is ATPKPWTVWK. Pro175 carries the post-translational modification 4-hydroxyproline. Trp176 carries a C-linked (Man) tryptophan glycan. Trp179 is modified (7'-hydroxytryptophan). C-linked (Man) hydroxytryptophan glycosylation is present at Trp179. The stretch at 181–190 is one B-10 repeat; sequence ATPKPWTAWK. Pro185 bears the 4-hydroxyproline mark. A C-linked (Man) tryptophan glycan is attached at Trp186. The residue at position 189 (Trp189) is a 7'-hydroxytryptophan. C-linked (Man) hydroxytryptophan glycosylation occurs at Trp189. One copy of the B-11 repeat lies at 191 to 200; it reads ATPKPWTAWK. Pro195 is modified (4-hydroxyproline). A glycan (C-linked (Man) tryptophan) is linked at Trp196. Trp199 bears the 7'-hydroxytryptophan mark. A glycan (C-linked (Man) hydroxytryptophan) is linked at Trp199. An A-6; approximate repeat occupies 201-210; it reads APPPAWSAWK. 4-hydroxyproline is present on residues Pro202, Pro203, and Pro204. 2 positions are modified to 7'-hydroxytryptophan: Trp206 and Trp209. Trp206 and Trp209 each carry a C-linked (Man) hydroxytryptophan glycan. One copy of the B-12; approximate repeat lies at 211 to 220; it reads ATPKPWTVWK. Pro215 bears the 4-hydroxyproline mark. C-linked (Man) tryptophan glycosylation occurs at Trp216. The residue at position 219 (Trp219) is a 7'-hydroxytryptophan. A C-linked (Man) hydroxytryptophan glycan is attached at Trp219. A B-13 repeat occupies 221–230; the sequence is ATPKPWTAWK. Position 225 is a 4-hydroxyproline (Pro225). Residue Trp226 is glycosylated (C-linked (Man) tryptophan). Trp229 carries the 7'-hydroxytryptophan modification. Trp229 carries a C-linked (Man) hydroxytryptophan glycan. Residues 231–240 form a B-14 repeat; it reads ATPKPWTAWK. Pro235 carries the 4-hydroxyproline modification. C-linked (Man) tryptophan glycosylation is present at Trp236. Residue Trp239 is modified to 7'-hydroxytryptophan. C-linked (Man) hydroxytryptophan glycosylation occurs at Trp239. The stretch at 241–250 is one B-15; approximate repeat; the sequence is ATPKPWTVWK. Position 245 is a 4-hydroxyproline (Pro245). C-linked (Man) tryptophan glycosylation is present at Trp246. At Trp249 the chain carries 7'-hydroxytryptophan. The C-linked (Man) hydroxytryptophan glycan is linked to Trp249. One copy of the B-16 repeat lies at 251 to 260; that stretch reads ATPKPWTAWK. Residue Pro255 is modified to 4-hydroxyproline. Trp256 carries C-linked (Man) tryptophan glycosylation. The residue at position 259 (Trp259) is a 7'-hydroxytryptophan. Trp259 is a glycosylation site (C-linked (Man) hydroxytryptophan). One copy of the A-7 repeat lies at 261–270; sequence APPPAWTAWK. 3 positions are modified to 4-hydroxyproline: Pro262, Pro263, and Pro264. 7'-hydroxytryptophan occurs at positions 266 and 269. C-linked (Man) hydroxytryptophan glycosylation is found at Trp266 and Trp269. The stretch at 271 to 280 is one B-17 repeat; sequence ATPKPWTAWK. A 4-hydroxyproline modification is found at Pro275. A C-linked (Man) tryptophan glycan is attached at Trp276. A 7'-hydroxytryptophan modification is found at Trp279. C-linked (Man) hydroxytryptophan glycosylation is present at Trp279. An A-8; approximate repeat occupies 281–290; the sequence is APPPTWTAWK. 4-hydroxyproline is present on residues Pro282, Pro283, and Pro284. 7'-hydroxytryptophan is present on residues Trp286 and Trp289. 2 C-linked (Man) hydroxytryptophan glycosylation sites follow: Trp286 and Trp289. The stretch at 291–300 is one B-18 repeat; it reads ATPKPWTAWK. The residue at position 295 (Pro295) is a 4-hydroxyproline. Residue Trp296 is glycosylated (C-linked (Man) tryptophan). Trp299 is modified (7'-hydroxytryptophan). A C-linked (Man) hydroxytryptophan glycan is attached at Trp299. The A-9; approximate repeat unit spans residues 301–310; the sequence is APPPAWSAWK. Pro302, Pro303, and Pro304 each carry 4-hydroxyproline. 7'-hydroxytryptophan occurs at positions 306 and 309. Residues Trp306 and Trp309 are each glycosylated (C-linked (Man) hydroxytryptophan). Residues 311-320 form a B-19 repeat; that stretch reads ATPKPWTAWK. Position 315 is a 4-hydroxyproline (Pro315). A glycan (C-linked (Man) tryptophan) is linked at Trp316. Trp319 is subject to 7'-hydroxytryptophan. C-linked (Man) hydroxytryptophan glycosylation occurs at Trp319. The stretch at 321–330 is one B-20 repeat; sequence ATPKPWTAWK. Pro325 bears the 4-hydroxyproline mark. A C-linked (Man) tryptophan glycan is attached at Trp326. Trp329 carries the post-translational modification 7'-hydroxytryptophan. Trp329 carries C-linked (Man) hydroxytryptophan glycosylation. The stretch at 331-340 is one B-21 repeat; the sequence is ATPKPWTAWK. The residue at position 335 (Pro335) is a 4-hydroxyproline. Residue Trp336 is glycosylated (C-linked (Man) tryptophan). Residue Trp339 is modified to 7'-hydroxytryptophan. The C-linked (Man) hydroxytryptophan glycan is linked to Trp339. A B-22 repeat occupies 341–350; it reads ATPKPWTAWK. Pro345 carries the post-translational modification 4-hydroxyproline. C-linked (Man) tryptophan glycosylation occurs at Trp346. Trp349 carries the 7'-hydroxytryptophan modification. A C-linked (Man) hydroxytryptophan glycan is attached at Trp349. Residues 351 to 360 form an A-10; approximate repeat; that stretch reads VPPPAWTAWK. A 4-hydroxyproline mark is found at Pro352, Pro353, and Pro354. A 7'-hydroxytryptophan mark is found at Trp356, Trp359, Trp366, and Trp369. C-linked (Man) hydroxytryptophan glycans are attached at residues Trp356, Trp359, Trp366, and Trp369. The A-11; approximate repeat unit spans residues 361-370; the sequence is AHPPAWTAWK. The B-23 repeat unit spans residues 371 to 380; sequence ATPKPWTAWK. Pro375 is subject to 4-hydroxyproline. Trp376 is a glycosylation site (C-linked (Man) tryptophan). Trp379 carries the post-translational modification 7'-hydroxytryptophan. Trp379 is a glycosylation site (C-linked (Man) hydroxytryptophan). The stretch at 381 to 390 is one A-12 repeat; that stretch reads APPPAWTAWK. Pro382, Pro383, and Pro384 each carry 4-hydroxyproline. Trp386 and Trp389 each carry 7'-hydroxytryptophan. Residues Trp386 and Trp389 are each glycosylated (C-linked (Man) hydroxytryptophan). A B-24 repeat occupies 391–400; the sequence is ATPKPWTAWK. Pro395 is subject to 4-hydroxyproline. A glycan (C-linked (Man) tryptophan) is linked at Trp396. 7'-hydroxytryptophan is present on Trp399. A glycan (C-linked (Man) hydroxytryptophan) is linked at Trp399. An A-13 repeat occupies 401 to 410; sequence APPPAWTAWK. 4-hydroxyproline is present on residues Pro402, Pro403, and Pro404. Residues Trp406 and Trp409 each carry the 7'-hydroxytryptophan modification. C-linked (Man) hydroxytryptophan glycans are attached at residues Trp406 and Trp409. One copy of the B-25 repeat lies at 411 to 420; that stretch reads ATPKPWTAWK. The residue at position 415 (Pro415) is a 4-hydroxyproline. Residue Trp416 is glycosylated (C-linked (Man) tryptophan). Trp419 carries the 7'-hydroxytryptophan modification. C-linked (Man) hydroxytryptophan glycosylation occurs at Trp419. Residues 421 to 430 form a B-26; approximate repeat; the sequence is ATPKPWTVWK. Pro425 carries the 4-hydroxyproline modification. C-linked (Man) tryptophan glycosylation occurs at Trp426. At Trp429 the chain carries 7'-hydroxytryptophan. Trp429 carries C-linked (Man) hydroxytryptophan glycosylation. Residues 431 to 440 form a B-27; approximate repeat; that stretch reads ATPKPWTAWR. Pro435 carries the post-translational modification 4-hydroxyproline. The C-linked (Man) tryptophan glycan is linked to Trp436. 7'-hydroxytryptophan is present on Trp439. Trp439 carries C-linked (Man) hydroxytryptophan glycosylation. Residues 452–507 are disordered; that stretch reads GHGYGGYGKPGKPGKPGSKGPRGPAGPPGATGKTGRTGATGKRGPPGYPGKPGVPG. Positions 453 to 462 are enriched in gly residues; the sequence is HGYGGYGKPG. One can recognise a Collagen-like domain in the interval 459-510; it reads GKPGKPGKPGSKGPRGPAGPPGATGKTGRTGATGKRGPPGYPGKPGVPGRNG. Over residues 466-496 the composition is skewed to low complexity; that stretch reads KPGSKGPRGPAGPPGATGKTGRTGATGKRGP. 4-hydroxyproline occurs at positions 497, 500, and 506.

Produced by the byssal gland.

The protein localises to the secreted. In terms of biological role, provides adhesiveness to the mussel's foot. Mussels produce one of the strongest water insoluble glues. The mussel's adhesive is a bundle of threads, called a byssus, formed by a fibrous collagenous core coated with adhesive proteins. This is Foot protein 1 variant 1 from Perna viridis (Asian green mussel).